Reading from the N-terminus, the 159-residue chain is RNA pyrophosphohydrolase (159 aa).

Residues G6 to K149 enclose the Nudix hydrolase domain. Positions G38–G59 match the Nudix box motif.

This sequence belongs to the Nudix hydrolase family. RppH subfamily. A divalent metal cation serves as cofactor.

Its function is as follows. Accelerates the degradation of transcripts by removing pyrophosphate from the 5'-end of triphosphorylated RNA, leading to a more labile monophosphorylated state that can stimulate subsequent ribonuclease cleavage. The protein is RNA pyrophosphohydrolase of Pseudomonas fluorescens (strain ATCC BAA-477 / NRRL B-23932 / Pf-5).